Reading from the N-terminus, the 200-residue chain is Recombination protein RecR (200 aa).

The segment at 58 to 75 adopts a C4-type zinc-finger fold; that stretch reads CSNCFCLKISQTSPCNFC. Residues 82 to 177 form the Toprim domain; that stretch reads SSLCIVATPK…KISRLALGMP (96 aa).

Belongs to the RecR family.

Its function is as follows. May play a role in DNA repair. It seems to be involved in an RecBC-independent recombinational process of DNA repair. It may act with RecF and RecO. The polypeptide is Recombination protein RecR (Chlamydia trachomatis serovar L2 (strain ATCC VR-902B / DSM 19102 / 434/Bu)).